A 98-amino-acid chain; its full sequence is Nuclear protein 2 (98 aa).

A compositionally biased stretch (low complexity) spans 1–11 (MEPAAPTVQPR). Disordered regions lie at residues 1-24 (MEPA…PPVG) and 78-98 (LNSQ…TRLT). Over residues 81–98 (QRKRRQRQLQPRPRTRLT) the composition is skewed to basic residues.

Belongs to the NUPR family.

The protein resides in the nucleus. Acts as a transcriptional repressor by inhibiting gene expression at the NUPR1 promoter in a p53/TP53-dependent manner in cancer cells. Involved in the G1 cell cycle arrest, and in a decrease in cell viability and cell proliferation. Plays a role as a negative regulator of the protumoral factor NUPR1. In Bos taurus (Bovine), this protein is Nuclear protein 2.